The primary structure comprises 208 residues: Large ribosomal subunit protein uL4 (208 aa).

The segment at 45–89 is disordered; sequence RQGTHAHKNRSAVSGGGKKPWRQKGTGRARQGSTRSPQWRGGGTV.

This sequence belongs to the universal ribosomal protein uL4 family. As to quaternary structure, part of the 50S ribosomal subunit.

Its function is as follows. One of the primary rRNA binding proteins, this protein initially binds near the 5'-end of the 23S rRNA. It is important during the early stages of 50S assembly. It makes multiple contacts with different domains of the 23S rRNA in the assembled 50S subunit and ribosome. In terms of biological role, forms part of the polypeptide exit tunnel. This chain is Large ribosomal subunit protein uL4, found in Lactococcus lactis subsp. cremoris (strain SK11).